A 203-amino-acid polypeptide reads, in one-letter code: FMN-dependent NADH:quinone oxidoreductase 5 (203 aa).

Residues Ser-9, 15–17 (SAS), 95–98 (MYNF), and 139–142 (TSGG) each bind FMN.

This sequence belongs to the azoreductase type 1 family. Homodimer. FMN serves as cofactor.

The catalysed reaction is 2 a quinone + NADH + H(+) = 2 a 1,4-benzosemiquinone + NAD(+). It catalyses the reaction N,N-dimethyl-1,4-phenylenediamine + anthranilate + 2 NAD(+) = 2-(4-dimethylaminophenyl)diazenylbenzoate + 2 NADH + 2 H(+). Quinone reductase that provides resistance to thiol-specific stress caused by electrophilic quinones. Functionally, also exhibits azoreductase activity. Catalyzes the reductive cleavage of the azo bond in aromatic azo compounds to the corresponding amines. This is FMN-dependent NADH:quinone oxidoreductase 5 from Pseudomonas fluorescens (strain ATCC BAA-477 / NRRL B-23932 / Pf-5).